The chain runs to 1388 residues: Dicer-like protein 2 (1388 aa).

One can recognise a Helicase ATP-binding domain in the interval 23–203 (MLEASMKENI…LLMVESNLDA (181 aa)). An ATP-binding site is contributed by 36–43 (MDTGSGKT). A DEAH box motif is present at residues 144–147 (DEAH). A Helicase C-terminal domain is found at 368–537 (KFESLLNFLD…DDERQLQSVS (170 aa)). Residues 564–658 (AMAHLHHFCA…LPLTKKPELK (95 aa)) enclose the Dicer dsRNA-binding fold domain. RNase III domains follow at residues 906 to 1059 (ISAI…VDGG) and 1098 to 1281 (NDRL…VDSG). Mg(2+) contacts are provided by glutamate 1137, aspartate 1267, and glutamate 1270.

This sequence belongs to the helicase family. Dicer subfamily. Mg(2+) is required as a cofactor. Requires Mn(2+) as cofactor.

Functionally, dicer-like endonuclease involved in cleaving double-stranded RNA in the RNA interference (RNAi) pathway. Produces 21 to 25 bp dsRNAs (siRNAs) which target the selective destruction of homologous RNAs leading to sequence-specific suppression of gene expression, called post-transcriptional gene silencing (PTGS). Part of a broad host defense response against viral infection and transposons. This is Dicer-like protein 2 (dcl2) from Aspergillus fumigatus (strain ATCC MYA-4609 / CBS 101355 / FGSC A1100 / Af293) (Neosartorya fumigata).